The chain runs to 225 residues: ATP-dependent Clp protease proteolytic subunit (225 aa).

Ser-123 (nucleophile) is an active-site residue. His-148 is an active-site residue.

The protein belongs to the peptidase S14 family. Fourteen ClpP subunits assemble into 2 heptameric rings which stack back to back to give a disk-like structure with a central cavity, resembling the structure of eukaryotic proteasomes.

The protein resides in the cytoplasm. The catalysed reaction is Hydrolysis of proteins to small peptides in the presence of ATP and magnesium. alpha-casein is the usual test substrate. In the absence of ATP, only oligopeptides shorter than five residues are hydrolyzed (such as succinyl-Leu-Tyr-|-NHMec, and Leu-Tyr-Leu-|-Tyr-Trp, in which cleavage of the -Tyr-|-Leu- and -Tyr-|-Trp bonds also occurs).. In terms of biological role, cleaves peptides in various proteins in a process that requires ATP hydrolysis. Has a chymotrypsin-like activity. Plays a major role in the degradation of misfolded proteins. This chain is ATP-dependent Clp protease proteolytic subunit, found in Chlorobium phaeovibrioides (strain DSM 265 / 1930) (Prosthecochloris vibrioformis (strain DSM 265)).